The sequence spans 421 residues: Imidazolonepropionase (421 aa).

Positions 80 and 82 each coordinate Fe(3+). 2 residues coordinate Zn(2+): His-80 and His-82. The 4-imidazolone-5-propanoate site is built by Arg-89, Tyr-152, and His-185. Tyr-152 is a binding site for N-formimidoyl-L-glutamate. A Fe(3+)-binding site is contributed by His-249. A Zn(2+)-binding site is contributed by His-249. A 4-imidazolone-5-propanoate-binding site is contributed by Glu-252. Position 324 (Asp-324) interacts with Fe(3+). Asp-324 is a binding site for Zn(2+). Asn-326 and Gly-328 together coordinate N-formimidoyl-L-glutamate. Residue Ser-329 participates in 4-imidazolone-5-propanoate binding.

It belongs to the metallo-dependent hydrolases superfamily. HutI family. In terms of assembly, homodimer. Zn(2+) is required as a cofactor. Fe(3+) serves as cofactor.

It localises to the cytoplasm. It catalyses the reaction 4-imidazolone-5-propanoate + H2O = N-formimidoyl-L-glutamate. It participates in amino-acid degradation; L-histidine degradation into L-glutamate; N-formimidoyl-L-glutamate from L-histidine: step 3/3. Catalyzes the hydrolytic cleavage of the carbon-nitrogen bond in imidazolone-5-propanoate to yield N-formimidoyl-L-glutamate. It is the third step in the universal histidine degradation pathway. The chain is Imidazolonepropionase from Bacillus subtilis (strain 168).